The sequence spans 400 residues: D-alanyl-D-alanine carboxypeptidase DacC (400 aa).

The first 27 residues, 1–27 (MTQYSSLLRGLAAGSAFLFLFAPTAFA), serve as a signal peptide directing secretion. S66 serves as the catalytic Acyl-ester intermediate. The Proton acceptor role is filled by K69. The active site involves S132. Substrate is bound at residue K235. The required for inner membrane binding stretch occupies residues 383–400 (VWDFVMMKFHQWFGSWFS).

It belongs to the peptidase S11 family.

Its subcellular location is the cell inner membrane. The catalysed reaction is Preferential cleavage: (Ac)2-L-Lys-D-Ala-|-D-Ala. Also transpeptidation of peptidyl-alanyl moieties that are N-acyl substituents of D-alanine.. It participates in cell wall biogenesis; peptidoglycan biosynthesis. Functionally, removes C-terminal D-alanyl residues from sugar-peptide cell wall precursors. In Escherichia coli (strain K12), this protein is D-alanyl-D-alanine carboxypeptidase DacC (dacC).